Reading from the N-terminus, the 437-residue chain is Cysteine--tRNA ligase (437 aa).

Cysteine 31 contacts Zn(2+). The short motif at 33 to 43 (PTVYNDLHLGN) is the 'HIGH' region element. The Zn(2+) site is built by cysteine 205, histidine 230, and glutamate 234. Residues 262 to 266 (KMSKS) carry the 'KMSKS' region motif. Position 265 (lysine 265) interacts with ATP.

It belongs to the class-I aminoacyl-tRNA synthetase family. Monomer. Zn(2+) serves as cofactor.

The protein localises to the cytoplasm. It catalyses the reaction tRNA(Cys) + L-cysteine + ATP = L-cysteinyl-tRNA(Cys) + AMP + diphosphate. This chain is Cysteine--tRNA ligase (cysS), found in Mycoplasma pneumoniae (strain ATCC 29342 / M129 / Subtype 1) (Mycoplasmoides pneumoniae).